The sequence spans 361 residues: uncharacterized protein (361 aa).

A signal peptide spans 1–28 (MSKSKFTKIIVVICIAAMFITGTSILSF).

This is an uncharacterized protein from Ruminiclostridium cellulolyticum (strain ATCC 35319 / DSM 5812 / JCM 6584 / H10) (Clostridium cellulolyticum).